Reading from the N-terminus, the 107-residue chain is Class I hydrophobin hgfI (107 aa).

The N-terminal stretch at Met-1 to Arg-24 is a signal peptide. 4 cysteine pairs are disulfide-bonded: Cys-27-Cys-88, Cys-34-Cys-82, Cys-35-Cys-68, and Cys-89-Cys-102.

The protein belongs to the fungal hydrophobin family. Self-assembles to form functional amyloid fibrils called rodlets with a length range 100-150 nm. Self-assembly into fibrillar rodlets occurs spontaneously at hydrophobic:hydrophilic interfaces and the rodlets further associate laterally to form amphipathic monolayers. In terms of tissue distribution, only weekly expressed in hyphae cultured in liquid medium.

The protein localises to the secreted. The protein resides in the cell wall. Its function is as follows. Aerial growth, conidiation, and dispersal of filamentous fungi in the environment rely upon a capability of their secreting small amphipathic proteins called hydrophobins (HPBs) with low sequence identity. Class I can self-assemble into an outermost layer of rodlet bundles on aerial cell surfaces, conferring cellular hydrophobicity that supports fungal growth, development and dispersal; whereas Class II form highly ordered films at water-air interfaces through intermolecular interactions but contribute nothing to the rodlet structure. HgfI is a class I hydrophobin that is involved in cell surface hydrophobicity and lowers the surface tension of water and change the nature of the surfaces to which it adsorbs. The polypeptide is Class I hydrophobin hgfI (Grifola frondosa (Maitake)).